We begin with the raw amino-acid sequence, 558 residues long: Dihydroxy-acid dehydratase (558 aa).

Position 50 (cysteine 50) interacts with [2Fe-2S] cluster. Aspartate 82 serves as a coordination point for Mg(2+). Cysteine 123 is a [2Fe-2S] cluster binding site. Mg(2+)-binding residues include aspartate 124 and lysine 125. At lysine 125 the chain carries N6-carboxylysine. Cysteine 195 contributes to the [2Fe-2S] cluster binding site. Glutamate 447 is a binding site for Mg(2+). Serine 472 serves as the catalytic Proton acceptor.

This sequence belongs to the IlvD/Edd family. Homodimer. [2Fe-2S] cluster is required as a cofactor. Mg(2+) serves as cofactor.

It catalyses the reaction (2R)-2,3-dihydroxy-3-methylbutanoate = 3-methyl-2-oxobutanoate + H2O. The catalysed reaction is (2R,3R)-2,3-dihydroxy-3-methylpentanoate = (S)-3-methyl-2-oxopentanoate + H2O. Its pathway is amino-acid biosynthesis; L-isoleucine biosynthesis; L-isoleucine from 2-oxobutanoate: step 3/4. The protein operates within amino-acid biosynthesis; L-valine biosynthesis; L-valine from pyruvate: step 3/4. Functions in the biosynthesis of branched-chain amino acids. Catalyzes the dehydration of (2R,3R)-2,3-dihydroxy-3-methylpentanoate (2,3-dihydroxy-3-methylvalerate) into 2-oxo-3-methylpentanoate (2-oxo-3-methylvalerate) and of (2R)-2,3-dihydroxy-3-methylbutanoate (2,3-dihydroxyisovalerate) into 2-oxo-3-methylbutanoate (2-oxoisovalerate), the penultimate precursor to L-isoleucine and L-valine, respectively. This is Dihydroxy-acid dehydratase from Saccharolobus islandicus (strain L.S.2.15 / Lassen #1) (Sulfolobus islandicus).